We begin with the raw amino-acid sequence, 117 residues long: Large ribosomal subunit protein bL20c (117 aa).

Belongs to the bacterial ribosomal protein bL20 family.

It localises to the plastid. Its subcellular location is the chloroplast. In terms of biological role, binds directly to 23S ribosomal RNA and is necessary for the in vitro assembly process of the 50S ribosomal subunit. It is not involved in the protein synthesizing functions of that subunit. This chain is Large ribosomal subunit protein bL20c, found in Nasturtium officinale (Watercress).